Here is a 256-residue protein sequence, read N- to C-terminus: Imidazole glycerol phosphate synthase subunit HisF (256 aa).

Catalysis depends on residues Asp11 and Asp130.

It belongs to the HisA/HisF family. Heterodimer of HisH and HisF.

Its subcellular location is the cytoplasm. The catalysed reaction is 5-[(5-phospho-1-deoxy-D-ribulos-1-ylimino)methylamino]-1-(5-phospho-beta-D-ribosyl)imidazole-4-carboxamide + L-glutamine = D-erythro-1-(imidazol-4-yl)glycerol 3-phosphate + 5-amino-1-(5-phospho-beta-D-ribosyl)imidazole-4-carboxamide + L-glutamate + H(+). The protein operates within amino-acid biosynthesis; L-histidine biosynthesis; L-histidine from 5-phospho-alpha-D-ribose 1-diphosphate: step 5/9. Functionally, IGPS catalyzes the conversion of PRFAR and glutamine to IGP, AICAR and glutamate. The HisF subunit catalyzes the cyclization activity that produces IGP and AICAR from PRFAR using the ammonia provided by the HisH subunit. This chain is Imidazole glycerol phosphate synthase subunit HisF, found in Cupriavidus metallidurans (strain ATCC 43123 / DSM 2839 / NBRC 102507 / CH34) (Ralstonia metallidurans).